The following is a 429-amino-acid chain: Probable M18 family aminopeptidase 2 (429 aa).

His82, His156, and His401 together coordinate Zn(2+).

Belongs to the peptidase M18 family. Requires Zn(2+) as cofactor.

The protein is Probable M18 family aminopeptidase 2 of Stutzerimonas stutzeri (strain A1501) (Pseudomonas stutzeri).